Consider the following 488-residue polypeptide: Rhamnulokinase (488 aa).

13–17 (ASSGR) is an ATP binding site. The cysteines at positions 68 and 222 are disulfide-linked. Residues glycine 83 and 236–238 (HDT) each bind substrate. Aspartate 237 functions as the Proton acceptor in the catalytic mechanism. Threonine 259 contacts ATP. Asparagine 296 contributes to the substrate binding site. Residue glutamine 304 coordinates ATP. A disulfide bridge links cysteine 353 with cysteine 370. Glycine 402 serves as a coordination point for ATP. Cysteine 413 and cysteine 417 are joined by a disulfide.

The protein belongs to the rhamnulokinase family. Mg(2+) is required as a cofactor.

It carries out the reaction L-rhamnulose + ATP = L-rhamnulose 1-phosphate + ADP + H(+). The protein operates within carbohydrate degradation; L-rhamnose degradation; glycerone phosphate from L-rhamnose: step 2/3. Functionally, involved in the catabolism of L-rhamnose (6-deoxy-L-mannose). Catalyzes the transfer of the gamma-phosphate group from ATP to the 1-hydroxyl group of L-rhamnulose to yield L-rhamnulose 1-phosphate. This chain is Rhamnulokinase, found in Klebsiella pneumoniae (strain 342).